A 384-amino-acid polypeptide reads, in one-letter code: 23S rRNA (uracil(747)-C(5))-methyltransferase RlmC (384 aa).

The [4Fe-4S] cluster site is built by Cys7, Cys15, Cys18, and Cys94. S-adenosyl-L-methionine is bound by residues Gln219, Phe248, Glu269, and Asn316. Cys343 serves as the catalytic Nucleophile.

The protein belongs to the class I-like SAM-binding methyltransferase superfamily. RNA M5U methyltransferase family. RlmC subfamily.

The enzyme catalyses uridine(747) in 23S rRNA + S-adenosyl-L-methionine = 5-methyluridine(747) in 23S rRNA + S-adenosyl-L-homocysteine + H(+). Functionally, catalyzes the formation of 5-methyl-uridine at position 747 (m5U747) in 23S rRNA. The polypeptide is 23S rRNA (uracil(747)-C(5))-methyltransferase RlmC (Shewanella sp. (strain MR-4)).